The sequence spans 186 residues: Elongation factor P (186 aa).

It belongs to the elongation factor P family.

It localises to the cytoplasm. It participates in protein biosynthesis; polypeptide chain elongation. Its function is as follows. Involved in peptide bond synthesis. Stimulates efficient translation and peptide-bond synthesis on native or reconstituted 70S ribosomes in vitro. Probably functions indirectly by altering the affinity of the ribosome for aminoacyl-tRNA, thus increasing their reactivity as acceptors for peptidyl transferase. In Prochlorococcus marinus (strain MIT 9515), this protein is Elongation factor P.